The chain runs to 916 residues: Phosphoenolpyruvate carboxylase (916 aa).

Catalysis depends on residues His144 and Lys578.

It belongs to the PEPCase type 1 family. The cofactor is Mg(2+).

The catalysed reaction is oxaloacetate + phosphate = phosphoenolpyruvate + hydrogencarbonate. Forms oxaloacetate, a four-carbon dicarboxylic acid source for the tricarboxylic acid cycle. This is Phosphoenolpyruvate carboxylase from Aromatoleum aromaticum (strain DSM 19018 / LMG 30748 / EbN1) (Azoarcus sp. (strain EbN1)).